A 220-amino-acid chain; its full sequence is Adenylate kinase (220 aa).

12–17 provides a ligand contact to ATP; that stretch reads GAGKGT. Residues 32–62 are NMP; it reads STGDIFRDIVKKENDELGKKIKEIMERGELV. Residues threonine 33, arginine 38, 60 to 62, 88 to 91, and glutamine 95 each bind AMP; these read ELV and GYPR. Residues 129–166 form an LID region; the sequence is ARRICPKCGRIYNLISLPPKEDELCDDCKVKLVQREDD. Arginine 130 contacts ATP. Positions 133 and 136 each coordinate Zn(2+). An ATP-binding site is contributed by 139 to 140; sequence IY. 2 residues coordinate Zn(2+): cysteine 153 and cysteine 156. 2 residues coordinate AMP: arginine 163 and arginine 174. Isoleucine 202 is a binding site for ATP.

It belongs to the adenylate kinase family. Monomer.

It is found in the cytoplasm. It catalyses the reaction AMP + ATP = 2 ADP. It functions in the pathway purine metabolism; AMP biosynthesis via salvage pathway; AMP from ADP: step 1/1. Functionally, catalyzes the reversible transfer of the terminal phosphate group between ATP and AMP. Plays an important role in cellular energy homeostasis and in adenine nucleotide metabolism. This chain is Adenylate kinase, found in Thermotoga maritima (strain ATCC 43589 / DSM 3109 / JCM 10099 / NBRC 100826 / MSB8).